The sequence spans 627 residues: 1-deoxy-D-xylulose-5-phosphate synthase (627 aa).

Thiamine diphosphate contacts are provided by residues histidine 87 and 128 to 130 (GHS). Position 159 (aspartate 159) interacts with Mg(2+). Residues 160-161 (GA), asparagine 188, phenylalanine 295, and glutamate 375 contribute to the thiamine diphosphate site. Position 188 (asparagine 188) interacts with Mg(2+).

This sequence belongs to the transketolase family. DXPS subfamily. Homodimer. Requires Mg(2+) as cofactor. Thiamine diphosphate is required as a cofactor.

It catalyses the reaction D-glyceraldehyde 3-phosphate + pyruvate + H(+) = 1-deoxy-D-xylulose 5-phosphate + CO2. Its pathway is metabolic intermediate biosynthesis; 1-deoxy-D-xylulose 5-phosphate biosynthesis; 1-deoxy-D-xylulose 5-phosphate from D-glyceraldehyde 3-phosphate and pyruvate: step 1/1. In terms of biological role, catalyzes the acyloin condensation reaction between C atoms 2 and 3 of pyruvate and glyceraldehyde 3-phosphate to yield 1-deoxy-D-xylulose-5-phosphate (DXP). The sequence is that of 1-deoxy-D-xylulose-5-phosphate synthase from Pseudomonas aeruginosa (strain LESB58).